Reading from the N-terminus, the 272-residue chain is 3',5'-cyclic adenosine monophosphate phosphodiesterase CpdA (272 aa).

Positions 21, 23, 63, 93, 161, 200, and 202 each coordinate Fe cation. AMP-binding positions include His23, Asp63, and 93-94 (NH). His202 provides a ligand contact to AMP.

The protein belongs to the cyclic nucleotide phosphodiesterase class-III family. As to quaternary structure, monomer. It depends on a divalent metal cation as a cofactor.

It carries out the reaction 3',5'-cyclic AMP + H2O = AMP + H(+). Its activity is regulated as follows. Activated by iron. Other divalent metal ions have no effect. In terms of biological role, hydrolyzes cAMP to 5'-AMP. Plays an important regulatory role in modulating the intracellular concentration of cAMP, thereby influencing cAMP-dependent processes. Specifically required for regulation of virulence factors. Can also hydrolyze cGMP, but cGMP is unlikely to be synthesized by P.aeruginosa and cAMP is probably the biologically relevant substrate for CpdA in vivo. This chain is 3',5'-cyclic adenosine monophosphate phosphodiesterase CpdA, found in Pseudomonas aeruginosa.